Reading from the N-terminus, the 401-residue chain is Chalcone synthase 6 (401 aa).

Cys-168 is a catalytic residue.

It belongs to the thiolase-like superfamily. Chalcone/stilbene synthases family.

The enzyme catalyses (E)-4-coumaroyl-CoA + 3 malonyl-CoA + 3 H(+) = 2',4,4',6'-tetrahydroxychalcone + 3 CO2 + 4 CoA. It functions in the pathway secondary metabolite biosynthesis; flavonoid biosynthesis. In terms of biological role, the primary product of this enzyme is 4,2',4',6'-tetrahydroxychalcone (also termed naringenin-chalcone or chalcone) which can under specific conditions spontaneously isomerize into naringenin. The sequence is that of Chalcone synthase 6 (CHS6) from Sorghum bicolor (Sorghum).